Here is a 355-residue protein sequence, read N- to C-terminus: Protein RecA (355 aa).

Residue 65 to 72 participates in ATP binding; the sequence is GPESSGKT.

Belongs to the RecA family.

It is found in the cytoplasm. Can catalyze the hydrolysis of ATP in the presence of single-stranded DNA, the ATP-dependent uptake of single-stranded DNA by duplex DNA, and the ATP-dependent hybridization of homologous single-stranded DNAs. It interacts with LexA causing its activation and leading to its autocatalytic cleavage. In Pseudomonas entomophila (strain L48), this protein is Protein RecA.